The following is a 1935-amino-acid chain: Myosin-7 (1935 aa).

A Myosin N-terminal SH3-like domain is found at 32–81; the sequence is DLKKDVFVPDDKQEFVKAKIVSREGGKVTAETEYGKTVTVKEDQVMQQNP. Positions 85 to 778 constitute a Myosin motor domain; that stretch reads DKIEDMAMLT…LLGLLEEMRD (694 aa). Lysine 129 carries the N6,N6,N6-trimethyllysine modification. 178 to 185 lines the ATP pocket; sequence GESGAGKT. Threonine 378 carries the phosphothreonine modification. 2 actin-binding regions span residues 655–677 and 757–771; these read LNKL…IPNE and KFGH…GLLG. The 30-residue stretch at 781–810 folds into the IQ domain; the sequence is LSRIITRIQAQSRGVLARMEYKKLLERRDS. Residues 839 to 1935 adopt a coiled-coil conformation; that stretch reads LLKSAEREKE…DIGTKGLNEE (1097 aa). Serine 1137 and serine 1269 each carry phosphoserine. Threonine 1282 is subject to Phosphothreonine. The residue at position 1308 (tyrosine 1308) is a Phosphotyrosine. Threonine 1309 is subject to Phosphothreonine. Residue serine 1510 is modified to Phosphoserine. Threonine 1513 bears the Phosphothreonine mark. A disordered region spans residues 1907–1935; sequence EERADIAESQVNKLRAKSRDIGTKGLNEE. The segment covering 1923–1935 has biased composition (basic and acidic residues); that stretch reads KSRDIGTKGLNEE.

This sequence belongs to the TRAFAC class myosin-kinesin ATPase superfamily. Myosin family. Muscle myosin is a hexameric protein that consists of 2 heavy chain subunits (MHC), 2 alkali light chain subunits (MLC) and 2 regulatory light chain subunits (MLC-2). Interacts with ECPAS. Interacts (via C-terminus) with LRRC39. Both wild type and variant Gln-403 are detected in skeletal muscle (at protein level).

The protein resides in the cytoplasm. The protein localises to the myofibril. It is found in the sarcomere. Its function is as follows. Myosins are actin-based motor molecules with ATPase activity essential for muscle contraction. Forms regular bipolar thick filaments that, together with actin thin filaments, constitute the fundamental contractile unit of skeletal and cardiac muscle. This chain is Myosin-7 (MYH7), found in Homo sapiens (Human).